The primary structure comprises 139 residues: D-ribose pyranase (139 aa).

Residue histidine 20 is the Proton donor of the active site. Substrate is bound by residues aspartate 28, histidine 106, and 128–130; that span reads YAN.

It belongs to the RbsD / FucU family. RbsD subfamily. As to quaternary structure, homodecamer.

It is found in the cytoplasm. It carries out the reaction beta-D-ribopyranose = beta-D-ribofuranose. The protein operates within carbohydrate metabolism; D-ribose degradation; D-ribose 5-phosphate from beta-D-ribopyranose: step 1/2. Catalyzes the interconversion of beta-pyran and beta-furan forms of D-ribose. This Actinobacillus pleuropneumoniae serotype 7 (strain AP76) protein is D-ribose pyranase.